Reading from the N-terminus, the 261-residue chain is Uridine-cytidine kinase 2 (261 aa).

The disordered stretch occupies residues 1 to 24 (MAGDSEQALPKHSPQNGQPFLIGV). 26–34 (GGTASGKSS) is an ATP binding site. The substrate site is built by D83, Y111, H116, R165, R175, and Q183. D212 lines the ATP pocket. Residues 238–247 (NGYTNGFTSP) show a composition bias toward polar residues. The tract at residues 238-261 (NGYTNGFTSPRTRHPSDSNSSRPH) is disordered.

It belongs to the uridine kinase family. As to quaternary structure, homotetramer.

The enzyme catalyses uridine + ATP = UMP + ADP + H(+). It carries out the reaction cytidine + ATP = CMP + ADP + H(+). The protein operates within pyrimidine metabolism; CTP biosynthesis via salvage pathway; CTP from cytidine: step 1/3. Its pathway is pyrimidine metabolism; UMP biosynthesis via salvage pathway; UMP from uridine: step 1/1. Functionally, phosphorylates uridine and cytidine to uridine monophosphate and cytidine monophosphate. Does not phosphorylate deoxyribonucleosides or purine ribonucleosides. Can use ATP or GTP as a phosphate donor. This is Uridine-cytidine kinase 2 (uck2) from Xenopus tropicalis (Western clawed frog).